The following is a 637-amino-acid chain: Limonene synthase, chloroplastic (637 aa).

The transit peptide at 1-56 directs the protein to the chloroplast; it reads MALLSIVSLQVPKSCGLKSLISSSNVQKALCISTAVPTLRMRRRQKALVINMKLTT. 3 residues coordinate Mg(2+): Asp388, Asp392, and Asp540. The DDXXD motif motif lies at 388–392; that stretch reads DDIYD.

It belongs to the terpene synthase family. Tpsd subfamily. Requires Mg(2+) as cofactor. Mn(2+) is required as a cofactor. The cofactor is K(+).

It is found in the plastid. Its subcellular location is the chloroplast. The enzyme catalyses (2E)-geranyl diphosphate = (4S)-limonene + diphosphate. Its pathway is terpene metabolism; oleoresin biosynthesis. Its function is as follows. Involved in defensive oleoresin formation in conifers in response to insect attack or other injury. Involved in monoterpene (C10) olefins biosynthesis. This chain is Limonene synthase, chloroplastic (ag10), found in Abies grandis (Grand fir).